The primary structure comprises 224 residues: UPF0758 protein PSPPH_0210 (224 aa).

An MPN domain is found at 102–224; the sequence is ALENPTQVRN…PLSMVERGLM (123 aa). Positions 173, 175, and 186 each coordinate Zn(2+). The JAMM motif motif lies at 173 to 186; it reads HNHPSGITTPSRSD.

Belongs to the UPF0758 family.

This Pseudomonas savastanoi pv. phaseolicola (strain 1448A / Race 6) (Pseudomonas syringae pv. phaseolicola (strain 1448A / Race 6)) protein is UPF0758 protein PSPPH_0210.